We begin with the raw amino-acid sequence, 131 residues long: Small ribosomal subunit protein uS19 (131 aa).

The protein belongs to the universal ribosomal protein uS19 family.

Functionally, protein S19 forms a complex with S13 that binds strongly to the 16S ribosomal RNA. The chain is Small ribosomal subunit protein uS19 from Nitrosopumilus maritimus (strain SCM1).